Consider the following 150-residue polypeptide: UPF0756 membrane protein ACICU_02320 (150 aa).

Helical transmembrane passes span 1 to 21 (MLAQ…CGLL), 45 to 65 (FFPY…TIGV), 83 to 103 (FISF…WLGG), and 115 to 135 (VVAG…GVPV).

It belongs to the UPF0756 family.

It is found in the cell membrane. The sequence is that of UPF0756 membrane protein ACICU_02320 from Acinetobacter baumannii (strain ACICU).